The sequence spans 187 residues: Elongation factor P (187 aa).

It belongs to the elongation factor P family.

The protein localises to the cytoplasm. It participates in protein biosynthesis; polypeptide chain elongation. Its function is as follows. Involved in peptide bond synthesis. Stimulates efficient translation and peptide-bond synthesis on native or reconstituted 70S ribosomes in vitro. Probably functions indirectly by altering the affinity of the ribosome for aminoacyl-tRNA, thus increasing their reactivity as acceptors for peptidyl transferase. This Corynebacterium urealyticum (strain ATCC 43042 / DSM 7109) protein is Elongation factor P.